The sequence spans 512 residues: Endoglucanase 14 (512 aa).

Residues 1–22 (MLAAAIELVVIATSCMVRDAHG) form the signal peptide. Asn-76 carries an N-linked (GlcNAc...) asparagine glycan. The active-site Nucleophile is Asp-103. Residues Asn-192 and Asn-215 are each glycosylated (N-linked (GlcNAc...) asparagine). Catalysis depends on residues His-433, Asp-484, and Glu-493.

It belongs to the glycosyl hydrolase 9 (cellulase E) family.

The protein localises to the secreted. The enzyme catalyses Endohydrolysis of (1-&gt;4)-beta-D-glucosidic linkages in cellulose, lichenin and cereal beta-D-glucans.. The chain is Endoglucanase 14 from Oryza sativa subsp. japonica (Rice).